The primary structure comprises 234 residues: Small ribosomal subunit protein uS3 (234 aa).

In terms of domain architecture, KH type-2 spans 39 to 108; that stretch reads IRKFVKKKLF…TVIVNVVEVK (70 aa). The segment at 212 to 234 is disordered; sequence KGKNEETNNETADNSRGRRREAK.

Belongs to the universal ribosomal protein uS3 family. As to quaternary structure, part of the 30S ribosomal subunit. Forms a tight complex with proteins S10 and S14.

Its function is as follows. Binds the lower part of the 30S subunit head. Binds mRNA in the 70S ribosome, positioning it for translation. The chain is Small ribosomal subunit protein uS3 from Alkaliphilus metalliredigens (strain QYMF).